A 179-amino-acid chain; its full sequence is Large ribosomal subunit protein uL5 (179 aa).

Belongs to the universal ribosomal protein uL5 family. As to quaternary structure, part of the 50S ribosomal subunit; part of the 5S rRNA/L5/L18/L25 subcomplex. Contacts the 5S rRNA and the P site tRNA. Forms a bridge to the 30S subunit in the 70S ribosome.

Functionally, this is one of the proteins that bind and probably mediate the attachment of the 5S RNA into the large ribosomal subunit, where it forms part of the central protuberance. In the 70S ribosome it contacts protein S13 of the 30S subunit (bridge B1b), connecting the 2 subunits; this bridge is implicated in subunit movement. Contacts the P site tRNA; the 5S rRNA and some of its associated proteins might help stabilize positioning of ribosome-bound tRNAs. The protein is Large ribosomal subunit protein uL5 of Rickettsia felis (strain ATCC VR-1525 / URRWXCal2) (Rickettsia azadi).